Consider the following 249-residue polypeptide: Acetylglutamate kinase (249 aa).

Residues 42–43, Arg64, and Asn155 each bind substrate; that span reads GG.

Belongs to the acetylglutamate kinase family. ArgB subfamily.

The protein localises to the cytoplasm. The enzyme catalyses N-acetyl-L-glutamate + ATP = N-acetyl-L-glutamyl 5-phosphate + ADP. The protein operates within amino-acid biosynthesis; L-arginine biosynthesis; N(2)-acetyl-L-ornithine from L-glutamate: step 2/4. Catalyzes the ATP-dependent phosphorylation of N-acetyl-L-glutamate. The chain is Acetylglutamate kinase from Endomicrobium trichonymphae.